Consider the following 405-residue polypeptide: Nuclear RNA export factor 2 (405 aa).

The tract at residues 1–33 (MRGQNRRGYRNIEGRLSLSSHSSHSSPRQTHVT) is disordered. Positions 16-26 (LSLSSHSSHSS) are enriched in low complexity. Positions 26–94 (SPRQTHVTNL…SVVLQHIGYK (69 aa)) constitute an RRM domain. LRR repeat units lie at residues 97-118 (RISG…SSLS) and 123-144 (FLKF…KKLG). Residues 215–382 (LVEEFIITYY…VAIVSDQLFI (168 aa)) form the NTF2 domain.

This sequence belongs to the NXF family.

The protein resides in the nucleus. Its function is as follows. Involved in the export of cellular mRNA to the cytoplasm. Plays a role in the nuclear retention of unspliced mRNAs. The polypeptide is Nuclear RNA export factor 2 (Caenorhabditis elegans).